Here is a 173-residue protein sequence, read N- to C-terminus: Shikimate kinase 1 (173 aa).

An ATP-binding site is contributed by 14–19 (GAGKST). Position 18 (serine 18) interacts with Mg(2+). Positions 36, 60, and 82 each coordinate substrate. Arginine 120 is a binding site for ATP. A substrate-binding site is contributed by arginine 140. Glutamine 157 contributes to the ATP binding site.

It belongs to the shikimate kinase family. As to quaternary structure, monomer. It depends on Mg(2+) as a cofactor.

Its subcellular location is the cytoplasm. It catalyses the reaction shikimate + ATP = 3-phosphoshikimate + ADP + H(+). It participates in metabolic intermediate biosynthesis; chorismate biosynthesis; chorismate from D-erythrose 4-phosphate and phosphoenolpyruvate: step 5/7. Catalyzes the specific phosphorylation of the 3-hydroxyl group of shikimic acid using ATP as a cosubstrate. The chain is Shikimate kinase 1 from Salmonella typhimurium (strain LT2 / SGSC1412 / ATCC 700720).